Here is a 1649-residue protein sequence, read N- to C-terminus: Cortactin-binding protein 2 (1649 aa).

A disordered region spans residues 1 to 27; it reads MATDSASCEPDLSRAPGDAEGATAEAA. Residues 15 to 25 show a composition bias toward low complexity; the sequence is APGDAEGATAE. The stretch at 118 to 275 forms a coiled coil; the sequence is RKMQERMSAQ…EQMKKGNDGK (158 aa). Disordered regions lie at residues 322 to 439, 451 to 476, and 492 to 604; these read PLSV…PGLN, GNAN…PTSR, and ALSR…LPPK. Polar residues predominate over residues 330-342; the sequence is STGSPLVSTNTKG. Over residues 395–416 the composition is skewed to low complexity; sequence STPSTPSGTAPAAAQTLGAAPQ. Polar residues predominate over residues 492 to 503; it reads ALSRFTSPQAGA. Position 495 is an asymmetric dimethylarginine (Arg-495). 6 ANK repeats span residues 699–729, 733–762, 766–795, 799–828, 832–861, and 901–931; these read GRPT…DINY, DSHS…RVDA, NGFT…NINH, GGQT…DRSI, DGWT…PAPG, and EGWT…EPER. Positions 1438-1471 are disordered; it reads SAAWRKVNTSPRKKPGHFSSPMWNKPDLKHEGMR. Residue Ser-1510 is modified to Phosphoserine. The tract at residues 1527-1649 is disordered; the sequence is KSESDISKIA…KHEHVEKRNK (123 aa). Positions 1528–1546 are enriched in basic and acidic residues; that stretch reads SESDISKIADSREDLRTFD. Composition is skewed to polar residues over residues 1547–1557, 1571–1584, and 1621–1630; these read SSRTNPVTSAP, PLSS…SNSK, and NTRQLEINNN. Residues 1631–1649 show a composition bias toward basic and acidic residues; the sequence is SKEENWNVDKHEHVEKRNK.

In terms of assembly, interacts with CTTN/cortactin SH3 domain. Interacts with STRN, STRN4/zinedin and MOB4/phocein; this interactions mediate the association with the STRIPAK core complex and may regulate dendritic spine distribution of the STRIPAK complex in hippocampal neurons. Activation of glutamate receptors weakens the interaction with STRN and STRN4.

Its subcellular location is the cytoplasm. It is found in the cell cortex. It localises to the cell projection. The protein localises to the dendritic spine. Regulates the dendritic spine distribution of CTTN/cortactin in hippocampal neurons, and thus controls dendritic spinogenesis and dendritic spine maintenance. Associates with the striatin-interacting phosphatase and kinase (STRIPAK) core complex to regulate dendritic spine distribution of the STRIPAK complex in hippocampal neurons. In Rattus norvegicus (Rat), this protein is Cortactin-binding protein 2 (Cttnbp2).